We begin with the raw amino-acid sequence, 181 residues long: ATP-dependent protease subunit HslV (181 aa).

T5 is a catalytic residue. S162, C165, and T168 together coordinate Na(+).

This sequence belongs to the peptidase T1B family. HslV subfamily. In terms of assembly, a double ring-shaped homohexamer of HslV is capped on each side by a ring-shaped HslU homohexamer. The assembly of the HslU/HslV complex is dependent on binding of ATP.

It is found in the cytoplasm. The catalysed reaction is ATP-dependent cleavage of peptide bonds with broad specificity.. Its activity is regulated as follows. Allosterically activated by HslU binding. In terms of biological role, protease subunit of a proteasome-like degradation complex believed to be a general protein degrading machinery. The polypeptide is ATP-dependent protease subunit HslV (Campylobacter hominis (strain ATCC BAA-381 / DSM 21671 / CCUG 45161 / LMG 19568 / NCTC 13146 / CH001A)).